The primary structure comprises 426 residues: Serine hydroxymethyltransferase (426 aa).

Residues leucine 113 and 117 to 119 (GHL) contribute to the (6S)-5,6,7,8-tetrahydrofolate site. At lysine 222 the chain carries N6-(pyridoxal phosphate)lysine. 363–365 (SAF) provides a ligand contact to (6S)-5,6,7,8-tetrahydrofolate.

Belongs to the SHMT family. In terms of assembly, homodimer. It depends on pyridoxal 5'-phosphate as a cofactor.

It is found in the cytoplasm. It catalyses the reaction (6R)-5,10-methylene-5,6,7,8-tetrahydrofolate + glycine + H2O = (6S)-5,6,7,8-tetrahydrofolate + L-serine. Its pathway is one-carbon metabolism; tetrahydrofolate interconversion. It functions in the pathway amino-acid biosynthesis; glycine biosynthesis; glycine from L-serine: step 1/1. Its function is as follows. Catalyzes the reversible interconversion of serine and glycine with tetrahydrofolate (THF) serving as the one-carbon carrier. This reaction serves as the major source of one-carbon groups required for the biosynthesis of purines, thymidylate, methionine, and other important biomolecules. Also exhibits THF-independent aldolase activity toward beta-hydroxyamino acids, producing glycine and aldehydes, via a retro-aldol mechanism. This Bacteroides thetaiotaomicron (strain ATCC 29148 / DSM 2079 / JCM 5827 / CCUG 10774 / NCTC 10582 / VPI-5482 / E50) protein is Serine hydroxymethyltransferase.